The primary structure comprises 215 residues: Cytochrome b6 (215 aa).

A helical transmembrane segment spans residues Ile32 to Phe52. Residue Cys35 participates in heme c binding. The heme b site is built by His86 and His100. Helical transmembrane passes span Ala90–Phe110, Leu116–Tyr136, and Ala186–Ile206. His187 and His202 together coordinate heme b.

This sequence belongs to the cytochrome b family. PetB subfamily. In terms of assembly, the 4 large subunits of the cytochrome b6-f complex are cytochrome b6, subunit IV (17 kDa polypeptide, PetD), cytochrome f and the Rieske protein, while the 4 small subunits are PetG, PetL, PetM and PetN. The complex functions as a dimer. It depends on heme b as a cofactor. The cofactor is heme c.

It is found in the cellular thylakoid membrane. Functionally, component of the cytochrome b6-f complex, which mediates electron transfer between photosystem II (PSII) and photosystem I (PSI), cyclic electron flow around PSI, and state transitions. The chain is Cytochrome b6 from Desmonostoc sp. (strain PCC 7906) (Nostoc sp. (strain PCC 7906)).